Reading from the N-terminus, the 504-residue chain is Immunoglobulin-binding protein EibC (504 aa).

A signal peptide spans 1-26 (MSKKFTMTLLSSSLAGLLVMSGGVSA). The segment at 27 to 413 (QEEKYTVPYA…IAANTRTLQQ (387 aa)) is surface exposed passenger domain. Residues 27 to 453 (QEEKYTVPYA…GLFQPYSVGK (427 aa)) lie on the Extracellular side of the membrane. The segment at 154–280 (DAKASGEFSV…TGTESDKTYG (127 aa)) is head domain. The interval 281-296 (TRVLGGLSDGTRNSDA) is neck. The right-handed coiled-coil (RHcc) stretch occupies residues 297 to 342 (ATVGQLNRKVGGVYDDVKARITVESEKQKKYTDQKTSEVNEKVEAR). Positions 343–368 (TTVGVDSDGKLTRAEGATKTIAVNDG) are saddle domain. Positions 369-434 (LVALSGRTDR…INENHKEMKR (66 aa)) are left-handed coiled-coil (LHcc). Residues 411 to 438 (LQQHSARLDSQQRQINENHKEMKRAAAQ) are a coiled coil. An outer membrane translocation of the passenger domain region spans residues 411–453 (LQQHSARLDSQQRQINENHKEMKRAAAQSAALTGLFQPYSVGK). 4 consecutive transmembrane segments (beta stranded) span residues 454–464 (FNATAAVGGYS), 467–478 (QALAVGVGYRFN), 481–490 (TAAKAGVAFS), and 494–504 (ASWNVGVNFEF). Residues 454 to 504 (FNATAAVGGYSDQQALAVGVGYRFNEQTAAKAGVAFSDGDASWNVGVNFEF) form a translocator domain region.

This sequence belongs to the autotransporter-2 (AT-2) (TC 1.B.40) family. Eib subfamily. As to quaternary structure, homotrimer; can probably form mixed heterotrimers in vivo. Will form mixed heterotrimers with EibD; these are correctly located in the outer membrane and bind IgG Fc, although less well than homotrimers. In denaturing gels runs as a band of about 200 kDa. Binds the Fc portion of immunoglobulins; binds more than 1 Fc per subunit.

The protein resides in the cell surface. The protein localises to the cell outer membrane. Functionally, binds (in a non-immune fashion) to the Fc portion of human IgG and less well to IgA; binding occurs on the cell surface. Confers the ability to survive exposure to human serum exposure. Binds to the Fc portion of human IgG and IgA and to whole mouse antibodies also via Fc. This is Immunoglobulin-binding protein EibC from Escherichia coli.